A 317-amino-acid chain; its full sequence is Cytochrome c biogenesis protein CcsA (317 aa).

The next 8 helical transmembrane spans lie at 9–29, 46–63, 71–91, 98–118, 143–163, 225–245, 258–273, and 286–306; these read ILTHISFSVVSIGITIYLITF, TATAFCLTGLLITRWVYS, LYESLIFLSWSLSIIHKIFDF, LSAITAPSAFFTQGFATSGFL, MVLGYAALLCGSLLSTALLVI, IISLGFIFLTTGILSGAVWAN, ETWAFITWTIFGIYLH, and AIVASMGFLIIWICYFGVNLL.

It belongs to the CcmF/CycK/Ccl1/NrfE/CcsA family. In terms of assembly, may interact with Ccs1.

It localises to the plastid. The protein resides in the chloroplast thylakoid membrane. Its function is as follows. Required during biogenesis of c-type cytochromes (cytochrome c6 and cytochrome f) at the step of heme attachment. This Citrus sinensis (Sweet orange) protein is Cytochrome c biogenesis protein CcsA.